The chain runs to 413 residues: Lysosomal phospholipase A and acyltransferase (413 aa).

The signal sequence occupies residues 1-33; the sequence is MDRHLCICREIQLRSGLLFPFLLLMMLADLALP. Residue Asp46 coordinates substrate. Cys65 and Cys89 are disulfide-bonded. Asn99 is a glycosylation site (N-linked (GlcNAc...) asparagine). Ser198 acts as the Acyl-ester intermediate in catalysis. Ser198 is a Zn(2+) binding site. Residue Met199 coordinates substrate. Residues Asn273 and Asn289 are each glycosylated (N-linked (GlcNAc...) asparagine). Cys355 provides a ligand contact to Zn(2+). Active-site charge relay system residues include Asp360 and His392. A Zn(2+)-binding site is contributed by His392. An N-linked (GlcNAc...) asparagine glycan is attached at Asn398.

Belongs to the AB hydrolase superfamily. Lipase family. Post-translationally, N-glycosylated. N-glycosylation is important for maturation of the enzyme and normal subcellular location. Detected in alveolar macrophages (at protein level). Widely expressed. Expressed at highest levels in alveolar macrophages.

Its subcellular location is the lysosome. It localises to the secreted. The protein localises to the membrane. The enzyme catalyses a 1,2-diacyl-sn-glycero-3-phosphocholine + H2O = a 2-acyl-sn-glycero-3-phosphocholine + a fatty acid + H(+). The catalysed reaction is 1,2-dihexadecanoyl-sn-glycero-3-phosphocholine + H2O = 2-hexadecanoyl-sn-glycero-3-phosphocholine + hexadecanoate + H(+). It catalyses the reaction 1-hexadecanoyl-2-(9Z-octadecenoyl)-sn-glycero-3-phosphocholine + H2O = 2-(9Z-octadecenoyl)-sn-glycero-3-phosphocholine + hexadecanoate + H(+). It carries out the reaction 1,2-di-(9Z-octadecenoyl)-sn-glycero-3-phosphocholine + H2O = 2-(9Z-octadecenoyl)-sn-glycero-3-phosphocholine + (9Z)-octadecenoate + H(+). The enzyme catalyses 1-hexadecanoyl-2-glutaroyl-sn-glycero-3-phosphocholine + H2O = 2-glutaroyl-sn-glycero-3-phosphocholine + hexadecanoate + H(+). The catalysed reaction is 1-hexadecanoyl-2-nonadioyl-sn-glycero-3-phosphocholine + H2O = 2-nonadioyl-sn-glycero-3-phosphocholine + hexadecanoate + H(+). It catalyses the reaction 1-hexadecanoyl-2-(5-oxopentanoyl)-sn-glycero-3-phosphocholine + H2O = 2-(5-oxopentanoyl)-sn-glycero-3-phosphocholine + hexadecanoate + H(+). It carries out the reaction 1-hexadecanoyl-2-(9-oxononanoyl)-sn-glycero-3-phosphocholine + H2O = 2-(9-oxononanoyl)-sn-glycero-3-phosphocholine + hexadecanoate + H(+). The enzyme catalyses a 1,2-diacyl-sn-glycero-3-phosphocholine + H2O = a 1-acyl-sn-glycero-3-phosphocholine + a fatty acid + H(+). The catalysed reaction is 1,2-dihexadecanoyl-sn-glycero-3-phosphocholine + H2O = 1-hexadecanoyl-sn-glycero-3-phosphocholine + hexadecanoate + H(+). It catalyses the reaction 1-hexadecanoyl-2-(9Z-octadecenoyl)-sn-glycero-3-phosphocholine + H2O = 1-hexadecanoyl-sn-glycero-3-phosphocholine + (9Z)-octadecenoate + H(+). It carries out the reaction 1,2-di-(9Z-octadecenoyl)-sn-glycero-3-phosphocholine + H2O = 1-(9Z-octadecenoyl)-sn-glycero-3-phosphocholine + (9Z)-octadecenoate + H(+). The enzyme catalyses a 1-acyl-sn-glycero-3-phosphocholine + H2O = sn-glycerol 3-phosphocholine + a fatty acid + H(+). The catalysed reaction is 1-hexadecanoyl-sn-glycero-3-phosphocholine + H2O = sn-glycerol 3-phosphocholine + hexadecanoate + H(+). It catalyses the reaction N-(acetyl)-sphing-4-enine + a 1,2-diacyl-sn-glycero-3-phosphoethanolamine = 1-O-acyl-N-(acetyl)-sphing-4-enine + a 2-acyl-sn-glycero-3-phosphoethanolamine. It carries out the reaction 1-hexadecanoyl-2-(9Z-octadecenoyl)-sn-glycero-3-phosphoethanolamine + N-(acetyl)-sphing-4-enine = 2-(9Z-octadecenoyl)-sn-glycero-3-phosphoethanolamine + 1-hexadecanoyl-N-(acetyl)-sphing-4-enine. The enzyme catalyses 1-hexadecanoyl-2-(9Z,12Z-octadecadienoyl)-sn-glycero-3-phosphoethanolamine + N-(acetyl)-sphing-4-enine = 2-(9Z,12Z)-octadecadienoyl-sn-glycero-3-phosphoethanolamine + 1-hexadecanoyl-N-(acetyl)-sphing-4-enine. The catalysed reaction is 1-hexadecanoyl-2-(5Z,8Z,11Z,14Z-eicosatetraenoyl)-sn-glycero-3-phosphoethanolamine + N-(acetyl)-sphing-4-enine = 2-(5Z,8Z,11Z,14Z)-eicosatetraenoyl-sn-glycero-3-phosphoethanolamine + 1-hexadecanoyl-N-(acetyl)-sphing-4-enine. It catalyses the reaction N-(acetyl)-sphing-4-enine + a 1,2-diacyl-sn-glycero-3-phosphoethanolamine = 1-O-acyl-N-(acetyl)-sphing-4-enine + a 1-acyl-sn-glycero-3-phosphoethanolamine. It carries out the reaction 1-hexadecanoyl-2-(9Z-octadecenoyl)-sn-glycero-3-phosphoethanolamine + N-(acetyl)-sphing-4-enine = 1-(9Z-octadecenoyl)-N-(acetyl)-sphing-4-enine + 1-hexadecanoyl-sn-glycero-3-phosphoethanolamine. The enzyme catalyses 1-hexadecanoyl-2-(9Z,12Z-octadecadienoyl)-sn-glycero-3-phosphoethanolamine + N-(acetyl)-sphing-4-enine = 1-(9Z,12Z-octadecadienoyl)-N-acetylsphing-4-enine + 1-hexadecanoyl-sn-glycero-3-phosphoethanolamine. The catalysed reaction is 1-hexadecanoyl-2-(5Z,8Z,11Z,14Z-eicosatetraenoyl)-sn-glycero-3-phosphoethanolamine + N-(acetyl)-sphing-4-enine = 1-(5Z,8Z,11Z,14Z)-eicosatetraenoyl-N-(acetyl)-sphing-4-enine + 1-hexadecanoyl-sn-glycero-3-phosphoethanolamine. It catalyses the reaction N-(acetyl)-sphing-4-enine + a 1,2-diacyl-sn-glycero-3-phosphocholine = 1-O-acyl-N-(acetyl)-sphing-4-enine + a 2-acyl-sn-glycero-3-phosphocholine. It carries out the reaction 1-hexadecanoyl-2-(9Z-octadecenoyl)-sn-glycero-3-phosphocholine + N-(acetyl)-sphing-4-enine = 1-hexadecanoyl-N-(acetyl)-sphing-4-enine + 2-(9Z-octadecenoyl)-sn-glycero-3-phosphocholine. The enzyme catalyses 1-hexadecanoyl-2-(9Z,12Z-octadecadienoyl)-sn-glycero-3-phosphocholine + N-(acetyl)-sphing-4-enine = 2-(9Z,12Z-octadecadienoyl)-sn-glycero-3-phosphocholine + 1-hexadecanoyl-N-(acetyl)-sphing-4-enine. The catalysed reaction is 1-hexadecanoyl-2-(5Z,8Z,11Z,14Z-eicosatetraenoyl)-sn-glycero-3-phosphocholine + N-(acetyl)-sphing-4-enine = 1-hexadecanoyl-N-(acetyl)-sphing-4-enine + 2-(5Z,8Z,11Z,14Z)-eicosatetraenoyl-sn-glycero-3-phosphocholine. It catalyses the reaction 1-hexadecanoyl-2-(4Z,7Z,10Z,13Z,16Z,19Z-docosahexaenoyl)-sn-glycero-3-phosphocholine + N-(acetyl)-sphing-4-enine = 2-(4Z,7Z,10Z,13Z,16Z,19Z-docosahexaenoyl)-sn-glycero-3-phosphocholine + 1-hexadecanoyl-N-(acetyl)-sphing-4-enine. It carries out the reaction 1-hexadecanoyl-2-nonadioyl-sn-glycero-3-phosphocholine + N-(acetyl)-sphing-4-enine = 2-nonadioyl-sn-glycero-3-phosphocholine + 1-hexadecanoyl-N-(acetyl)-sphing-4-enine. The enzyme catalyses 1-octadecanoyl-2-(9Z-octadecenoyl)-sn-glycero-3-phosphocholine + N-(acetyl)-sphing-4-enine = 1-octadecanoyl-N-(acetyl)-sphing-4-enine + 2-(9Z-octadecenoyl)-sn-glycero-3-phosphocholine. The catalysed reaction is 1-(9Z)-octadecenoyl-2-octadecanoyl-sn-glycero-3-phosphocholine + N-(acetyl)-sphing-4-enine = 2-octadecanoyl-sn-glycero-3-phosphocholine + 1-(9Z-octadecenoyl)-N-(acetyl)-sphing-4-enine. It catalyses the reaction 1-octadecanoyl-2-(5Z,8Z,11Z,14Z-eicosatetraenoyl)-sn-glycero-3-phosphocholine + N-(acetyl)-sphing-4-enine = 1-octadecanoyl-N-(acetyl)-sphing-4-enine + 2-(5Z,8Z,11Z,14Z)-eicosatetraenoyl-sn-glycero-3-phosphocholine. It carries out the reaction 1-(9Z-octadecenoyl)-2-hexadecanoyl-sn-glycero-3-phosphocholine + N-(acetyl)-sphing-4-enine = 1-(9Z-octadecenoyl)-N-(acetyl)-sphing-4-enine + 2-hexadecanoyl-sn-glycero-3-phosphocholine. The enzyme catalyses N-(acetyl)-sphing-4-enine + a 1,2-diacyl-sn-glycero-3-phosphocholine = 1-O-acyl-N-(acetyl)-sphing-4-enine + a 1-acyl-sn-glycero-3-phosphocholine. The catalysed reaction is 1-hexadecanoyl-2-(9Z-octadecenoyl)-sn-glycero-3-phosphocholine + N-(acetyl)-sphing-4-enine = 1-(9Z-octadecenoyl)-N-(acetyl)-sphing-4-enine + 1-hexadecanoyl-sn-glycero-3-phosphocholine. It catalyses the reaction 1-hexadecanoyl-2-(9Z,12Z-octadecadienoyl)-sn-glycero-3-phosphocholine + N-(acetyl)-sphing-4-enine = 1-(9Z,12Z-octadecadienoyl)-N-acetylsphing-4-enine + 1-hexadecanoyl-sn-glycero-3-phosphocholine. It carries out the reaction 1-hexadecanoyl-2-(5Z,8Z,11Z,14Z-eicosatetraenoyl)-sn-glycero-3-phosphocholine + N-(acetyl)-sphing-4-enine = 1-(5Z,8Z,11Z,14Z)-eicosatetraenoyl-N-(acetyl)-sphing-4-enine + 1-hexadecanoyl-sn-glycero-3-phosphocholine. The enzyme catalyses 1-hexadecanoyl-2-(4Z,7Z,10Z,13Z,16Z,19Z-docosahexaenoyl)-sn-glycero-3-phosphocholine + N-(acetyl)-sphing-4-enine = 1-(4Z,7Z,10Z,13Z,16Z,19Z-docosahexaenoyl)-N-(acetyl)-sphing-4-enine + 1-hexadecanoyl-sn-glycero-3-phosphocholine. The catalysed reaction is 1-octadecanoyl-2-(9Z-octadecenoyl)-sn-glycero-3-phosphocholine + N-(acetyl)-sphing-4-enine = 1-(9Z-octadecenoyl)-N-(acetyl)-sphing-4-enine + 1-octadecanoyl-sn-glycero-3-phosphocholine. It catalyses the reaction 1-octadecanoyl-2-(9Z,12Z)-octadecadienoyl-sn-glycero-3-phosphocholine + N-(acetyl)-sphing-4-enine = 1-(9Z,12Z-octadecadienoyl)-N-acetylsphing-4-enine + 1-octadecanoyl-sn-glycero-3-phosphocholine. It carries out the reaction 1-(9Z-octadecenoyl)-2-hexadecanoyl-sn-glycero-3-phosphocholine + N-(acetyl)-sphing-4-enine = 1-hexadecanoyl-N-(acetyl)-sphing-4-enine + 1-(9Z-octadecenoyl)-sn-glycero-3-phosphocholine. The enzyme catalyses 1-(9Z)-octadecenoyl-2-octadecanoyl-sn-glycero-3-phosphocholine + N-(acetyl)-sphing-4-enine = 1-octadecanoyl-N-(acetyl)-sphing-4-enine + 1-(9Z-octadecenoyl)-sn-glycero-3-phosphocholine. The catalysed reaction is 1,2-di-(9Z-octadecenoyl)-sn-glycero-3-phosphocholine + N-(acetyl)-sphing-4-enine = 1-(9Z-octadecenoyl)-N-(acetyl)-sphing-4-enine + 1-(9Z-octadecenoyl)-sn-glycero-3-phosphocholine. It catalyses the reaction 1-octadecanoyl-2-(5Z,8Z,11Z,14Z-eicosatetraenoyl)-sn-glycero-3-phosphocholine + N-(acetyl)-sphing-4-enine = 1-(5Z,8Z,11Z,14Z)-eicosatetraenoyl-N-(acetyl)-sphing-4-enine + 1-octadecanoyl-sn-glycero-3-phosphocholine. It carries out the reaction a 1,2-diacyl-sn-glycero-3-phospho-L-serine + N-(acetyl)-sphing-4-enine = a 2-acyl-sn-glycero-3-phospho-L-serine + 1-O-acyl-N-(acetyl)-sphing-4-enine. The enzyme catalyses 1-octadecanoyl-2-(9Z-octadecenoyl)-sn-glycero-3-phospho-L-serine + N-(acetyl)-sphing-4-enine = 2-(9Z-octadecenoyl)-sn-glycero-3-phospho-L-serine + 1-octadecanoyl-N-(acetyl)-sphing-4-enine. The catalysed reaction is a 1,2-diacyl-sn-glycero-3-phospho-L-serine + N-(acetyl)-sphing-4-enine = 1-O-acyl-N-(acetyl)-sphing-4-enine + a 1-acyl-sn-glycero-3-phospho-L-serine. It catalyses the reaction 1-octadecanoyl-2-(9Z-octadecenoyl)-sn-glycero-3-phospho-L-serine + N-(acetyl)-sphing-4-enine = 1-octadecanoyl-sn-glycero-3-phosphoserine + 1-(9Z-octadecenoyl)-N-(acetyl)-sphing-4-enine. It carries out the reaction a 1,2-diacyl-sn-glycero-3-phospho-(1'-sn-glycerol) + N-(acetyl)-sphing-4-enine = 2-acyl-sn-glycero-3-phospho-(1'-sn-glycerol) + 1-O-acyl-N-(acetyl)-sphing-4-enine. The enzyme catalyses 1-octadecanoyl-2-(9Z-octadecenoyl)-sn-glycero-3-phospho-(1'-sn-glycerol) + N-(acetyl)-sphing-4-enine = 2-(9Z-octadecenoyl)-sn-glycero-3-phospho-(1'-sn-glycerol) + 1-octadecanoyl-N-(acetyl)-sphing-4-enine. The catalysed reaction is a 1,2-diacyl-sn-glycero-3-phospho-(1'-sn-glycerol) + N-(acetyl)-sphing-4-enine = 1-O-acyl-N-(acetyl)-sphing-4-enine + 1-acyl-sn-glycero-3-phospho-(1'-sn-glycerol). It catalyses the reaction 1-octadecanoyl-2-(9Z-octadecenoyl)-sn-glycero-3-phospho-(1'-sn-glycerol) + N-(acetyl)-sphing-4-enine = 1-octadecanoyl-sn-glycero-3-phospho-(1'-sn-glycerol) + 1-(9Z-octadecenoyl)-N-(acetyl)-sphing-4-enine. It carries out the reaction an N-acylethanolamine + a 1,2-diacyl-sn-glycero-3-phosphocholine = 2-(acylamino)ethyl fatty acid + a 2-acyl-sn-glycero-3-phosphocholine. The enzyme catalyses an N-acylethanolamine + a 1,2-diacyl-sn-glycero-3-phosphocholine = 2-(acylamino)ethyl fatty acid + a 1-acyl-sn-glycero-3-phosphocholine. The catalysed reaction is N-(5Z,8Z,11Z,14Z-eicosatetraenoyl)-ethanolamine + 1,2-di-(9Z-octadecenoyl)-sn-glycero-3-phosphocholine = 2-[(5Z,8Z,11Z,14Z)-eicosatetraenoylamino]ethyl (9Z)-octadecenoate + (9Z-octadecenoyl)-sn-glycero-3-phosphocholine. It catalyses the reaction N-(9Z-octadecenoyl) ethanolamine + 1,2-di-(9Z-octadecenoyl)-sn-glycero-3-phosphocholine = 2-[(9Z)-octadecenoylamino]ethyl (9Z)-octadecenoate + (9Z-octadecenoyl)-sn-glycero-3-phosphocholine. It carries out the reaction a 3-acyl-sn-glycerol + a 1,2-diacyl-sn-glycero-3-phosphocholine = a 1,3-diacylglycerol + a 1-acyl-sn-glycero-3-phosphocholine. The enzyme catalyses a 3-acyl-sn-glycerol + a 1,2-diacyl-sn-glycero-3-phosphocholine = a 1,3-diacylglycerol + a 2-acyl-sn-glycero-3-phosphocholine. The catalysed reaction is 3-(9Z-octadecenoyl)-sn-glycerol + 1,2-di-(9Z-octadecenoyl)-sn-glycero-3-phosphocholine = 1,3-di-(9Z-octadecenoyl)-glycerol + (9Z-octadecenoyl)-sn-glycero-3-phosphocholine. It catalyses the reaction 3-hexadecanoyl-sn-glycerol + 1,2-di-(9Z-octadecenoyl)-sn-glycero-3-phosphocholine = 1-(9Z)-octadecenoyl-3-hexadecanoyl-sn-glycerol + (9Z-octadecenoyl)-sn-glycero-3-phosphocholine. It carries out the reaction a 1-acyl-sn-glycerol + a 1,2-diacyl-sn-glycero-3-phosphocholine = a 1,3-diacylglycerol + a 2-acyl-sn-glycero-3-phosphocholine. The enzyme catalyses a 1-acyl-sn-glycerol + a 1,2-diacyl-sn-glycero-3-phosphocholine = a 1,3-diacylglycerol + a 1-acyl-sn-glycero-3-phosphocholine. The catalysed reaction is 1-(9Z-octadecenoyl)-sn-glycerol + 1,2-di-(9Z-octadecenoyl)-sn-glycero-3-phosphocholine = 1,3-di-(9Z-octadecenoyl)-glycerol + (9Z-octadecenoyl)-sn-glycero-3-phosphocholine. It catalyses the reaction 1-hexadecanoyl-sn-glycerol + 1,2-di-(9Z-octadecenoyl)-sn-glycero-3-phosphocholine = 1-hexadecanoyl-3-(9Z)-octadecenoyl-sn-glycerol + (9Z-octadecenoyl)-sn-glycero-3-phosphocholine. It carries out the reaction a 2-acylglycerol + a 1,2-diacyl-sn-glycero-3-phosphocholine = a 1,2-diacylglycerol + a 2-acyl-sn-glycero-3-phosphocholine. The enzyme catalyses a 2-acylglycerol + a 1,2-diacyl-sn-glycero-3-phosphocholine = a 1,2-diacylglycerol + a 1-acyl-sn-glycero-3-phosphocholine. The catalysed reaction is 2-hexadecanoylglycerol + 1,2-di-(9Z-octadecenoyl)-sn-glycero-3-phosphocholine = 1-(9Z)-octadecenoyl-2-hexadecanoylglycerol + (9Z-octadecenoyl)-sn-glycero-3-phosphocholine. It catalyses the reaction 1-O-alkylglycerol + a 1,2-diacyl-sn-glycero-3-phosphocholine = 1-O-alkyl-3-acylglycerol + a 1-acyl-sn-glycero-3-phosphocholine. It carries out the reaction 1-O-alkylglycerol + a 1,2-diacyl-sn-glycero-3-phosphocholine = 1-O-alkyl-3-acylglycerol + a 2-acyl-sn-glycero-3-phosphocholine. The enzyme catalyses 1-O-hexadecylglycerol + 1,2-di-(9Z-octadecenoyl)-sn-glycero-3-phosphocholine = 1-O-hexadecyl-3-(9Z)-octadecenoylglycerol + (9Z-octadecenoyl)-sn-glycero-3-phosphocholine. The catalysed reaction is 1-O-alkyl-2-acyl-sn-glycerol + a 1,2-diacyl-sn-glycero-3-phosphocholine = 1-O-alkyl-2,3-diacyl-sn-glycerol + a 2-acyl-sn-glycero-3-phosphocholine. It catalyses the reaction 1-O-alkyl-2-acyl-sn-glycerol + a 1,2-diacyl-sn-glycero-3-phosphocholine = 1-O-alkyl-2,3-diacyl-sn-glycerol + a 1-acyl-sn-glycero-3-phosphocholine. It carries out the reaction 1-O-hexadecyl-2-acetyl-sn-glycerol + 1,2-di-(9Z-octadecenoyl)-sn-glycero-3-phosphocholine = 1-O-hexadecyl-2-acetyl-3-(9Z)-octadecenoyl-sn-glycerol + (9Z-octadecenoyl)-sn-glycero-3-phosphocholine. The enzyme catalyses 1-O-hexadecyl-2-O-methyl-sn-glycerol + 1,2-di-(9Z-octadecenoyl)-sn-glycero-3-phosphocholine = 1-O-hexadecyl-2-O-methyl-3-(9Z)-octadecenoyl-sn-glycerol + (9Z-octadecenoyl)-sn-glycero-3-phosphocholine. The catalysed reaction is a 1,2-diacyl-sn-glycero-3-phosphoethanolamine + H2O = a 1-acyl-sn-glycero-3-phosphoethanolamine + a fatty acid + H(+). It catalyses the reaction 1-acyl-2-(5Z,8Z,11Z,14Z)-eicosatetraenoyl-sn-glycero-3-phosphoethanolamine + H2O = a 1-acyl-sn-glycero-3-phosphoethanolamine + (5Z,8Z,11Z,14Z)-eicosatetraenoate + H(+). It carries out the reaction a 1,2-diacyl-sn-glycero-3-phospho-(1'-sn-glycerol) + H2O = 1-acyl-sn-glycero-3-phospho-(1'-sn-glycerol) + a fatty acid + H(+). The enzyme catalyses 1-hexadecanoyl-2-(9Z-octadecenoyl)-sn-glycero-3-phospho-(1'-sn-glycerol) + H2O = 1-hexadecanoyl-sn-glycero-3-phospho-(1'-sn-glycerol) + (9Z)-octadecenoate + H(+). The catalysed reaction is a 1,2-diacyl-sn-glycero-3-phospho-(1'-sn-glycerol) + H2O = 2-acyl-sn-glycero-3-phospho-(1'-sn-glycerol) + a fatty acid + H(+). It catalyses the reaction 1-hexadecanoyl-2-(9Z-octadecenoyl)-sn-glycero-3-phospho-(1'-sn-glycerol) + H2O = 2-(9Z-octadecenoyl)-sn-glycero-3-phospho-(1'-sn-glycerol) + hexadecanoate + H(+). With respect to regulation, transacylase activity is inhibited by MJ33. Functionally, has dual calcium-independent phospholipase and O-acyltransferase activities with a potential role in glycerophospholipid homeostasis and remodeling of acyl groups of lipophilic alcohols present in acidic cellular compartments. Catalyzes hydrolysis of the ester bond of the fatty acyl group attached at sn-1 or sn-2 position of phospholipids (phospholipase A1 or A2 activity) and transfer it to the hydroxyl group at the first carbon of lipophilic alcohols (O-acyltransferase activity). Among preferred fatty acyl donors are phosphatidylcholines, phosphatidylethanolamines, phosphatidylglycerols and phosphatidylserines. Favors sn-2 over sn-1 deacylation of unsaturated fatty acyl groups of phosphatidylcholines, phosphatidylethanolamines, and phosphatidylglycerols. Among preferred fatty acyl acceptors are natural lipophilic alcohols including short-chain ceramide N-acetyl-sphingosine (C2 ceramide), alkylacylglycerols, monoacylglycerols, and acylethanolamides such as anandamide and oleoylethanolamide. Selectively hydrolyzes the sn-1 fatty acyl group of truncated oxidized phospholipids and may play a role in detoxification of reactive oxidized phospholipids during oxidative stress. Required for normal phospholipid degradation in alveolar macrophages with potential implications in the clearance of pulmonary surfactant, which is mainly composed of dipalmitoylphosphatidylcholine (1,2-dihexadecanoyl-sn-glycero-3-phosphocholine). Involved in the first step of bis(monoacylglycero)phosphate (BMP) de novo synthesis from phosphatidylglycerol (1,2-diacyl-sn-glycero-3-phospho-(1'-sn-glycerol), PG). BMP is an important player in cargo sorting and degradation, regulation of cellular cholesterol levels and intercellular communication. At neutral pH, hydrolyzes the sn-1 fatty acyl group of the lysophosphatidylcholines. In Rattus norvegicus (Rat), this protein is Lysosomal phospholipase A and acyltransferase (Pla2g15).